We begin with the raw amino-acid sequence, 509 residues long: Coiled-coil domain-containing protein 181 (509 aa).

2 disordered regions span residues 27-122 and 287-368; these read INDK…EDEE and LAQV…NEKK. Composition is skewed to basic and acidic residues over residues 41–58 and 67–82; these read ACKK…KETE and DPDK…RRND. Residues 319-333 show a composition bias toward polar residues; it reads RIQSAGVSPVTSTYC. Coiled coils occupy residues 335-377 and 418-488; these read SPRQ…VFKA and LKKK…RSKQ. A compositionally biased stretch (basic and acidic residues) spans 337-368; it reads RQKELQKQLERKRERLKREEEQRKLEEENEKK.

The protein belongs to the CCDC181 family. Homodimer. Interacts with HOOK1. Interacts with HOOK2. Interacts with HOOK3.

The protein resides in the cytoplasm. It is found in the cytoskeleton. Its subcellular location is the cell projection. The protein localises to the cilium. It localises to the flagellum. Its function is as follows. Microtubule-binding protein that localizes to the microtubular manchette of elongating spermatids. The sequence is that of Coiled-coil domain-containing protein 181 from Rattus norvegicus (Rat).